The following is a 361-amino-acid chain: Phospho-N-acetylmuramoyl-pentapeptide-transferase (361 aa).

10 helical membrane-spanning segments follow: residues 28–48, 74–94, 99–119, 133–153, 168–188, 203–223, 236–256, 263–283, 288–308, and 338–358; these read LAII…IKFL, TMGG…LADL, TWIT…DDYA, SKLL…EYLD, LSLD…VGSS, VPIA…GNLI, TGEL…FLWF, VFMG…ISVI, IVLA…ILQV, and KVVI…LSSL.

This sequence belongs to the glycosyltransferase 4 family. MraY subfamily. Mg(2+) serves as cofactor.

The protein localises to the cell inner membrane. The catalysed reaction is UDP-N-acetyl-alpha-D-muramoyl-L-alanyl-gamma-D-glutamyl-meso-2,6-diaminopimeloyl-D-alanyl-D-alanine + di-trans,octa-cis-undecaprenyl phosphate = di-trans,octa-cis-undecaprenyl diphospho-N-acetyl-alpha-D-muramoyl-L-alanyl-D-glutamyl-meso-2,6-diaminopimeloyl-D-alanyl-D-alanine + UMP. It participates in cell wall biogenesis; peptidoglycan biosynthesis. Catalyzes the initial step of the lipid cycle reactions in the biosynthesis of the cell wall peptidoglycan: transfers peptidoglycan precursor phospho-MurNAc-pentapeptide from UDP-MurNAc-pentapeptide onto the lipid carrier undecaprenyl phosphate, yielding undecaprenyl-pyrophosphoryl-MurNAc-pentapeptide, known as lipid I. This is Phospho-N-acetylmuramoyl-pentapeptide-transferase from Rickettsia massiliae (strain Mtu5).